The following is a 143-amino-acid chain: Photosystem I reaction center subunit IV A, chloroplastic (143 aa).

The transit peptide at 1 to 44 (MAMTTASTVFVLPANVTSVAGASSSRSSVSFLPMRNAGSRLVVR) directs the protein to the chloroplast. A disordered region spans residues 43-85 (VRAAEDPAPASSSSKDSPAAAAAPDGATATKPKPPPIGPKRGS). Low complexity predominate over residues 48 to 73 (DPAPASSSSKDSPAAAAAPDGATATK).

The protein belongs to the PsaE family. Post-translationally, 2 isoforms may exist. With or without the N-terminal alanine.

The protein resides in the plastid. It is found in the chloroplast thylakoid membrane. Functionally, stabilizes the interaction between PsaC and the PSI core, assists the docking of the ferredoxin to PSI and interacts with ferredoxin-NADP oxidoreductase. The polypeptide is Photosystem I reaction center subunit IV A, chloroplastic (PSAE1) (Arabidopsis thaliana (Mouse-ear cress)).